The following is a 288-amino-acid chain: Alpha/beta hydrolase domain-containing protein 17B (288 aa).

Catalysis depends on charge relay system residues S170, D235, and H264. Phosphoserine is present on S282.

Belongs to the AB hydrolase superfamily. ABHD17 family. Palmitoylated on cysteine residues located in a cysteine cluster at the N-terminus which promotes membrane localization. Palmitoylation is required for post-synaptic localization and for depalmitoylating activity towards DLG4/PSD95. As to expression, expressed in brain.

Its subcellular location is the cell membrane. The protein localises to the recycling endosome membrane. It is found in the cell projection. The protein resides in the dendritic spine. It localises to the postsynaptic density membrane. The catalysed reaction is S-hexadecanoyl-L-cysteinyl-[protein] + H2O = L-cysteinyl-[protein] + hexadecanoate + H(+). Hydrolyzes fatty acids from S-acylated cysteine residues in proteins. Has depalmitoylating activity towards DLG4/PSD95. Has depalmitoylating activity towards GAP43. Has depalmitoylating activity towards MAP6. Has depalmitoylating activity towards NRAS. The sequence is that of Alpha/beta hydrolase domain-containing protein 17B from Mus musculus (Mouse).